The chain runs to 204 residues: ATP-dependent Clp protease proteolytic subunit (204 aa).

The active-site Nucleophile is the Ser101. His126 is a catalytic residue.

The protein belongs to the peptidase S14 family. In terms of assembly, component of the chloroplastic Clp protease core complex.

It is found in the plastid. Its subcellular location is the chloroplast stroma. It catalyses the reaction Hydrolysis of proteins to small peptides in the presence of ATP and magnesium. alpha-casein is the usual test substrate. In the absence of ATP, only oligopeptides shorter than five residues are hydrolyzed (such as succinyl-Leu-Tyr-|-NHMec, and Leu-Tyr-Leu-|-Tyr-Trp, in which cleavage of the -Tyr-|-Leu- and -Tyr-|-Trp bonds also occurs).. Functionally, cleaves peptides in various proteins in a process that requires ATP hydrolysis. Has a chymotrypsin-like activity. Plays a major role in the degradation of misfolded proteins. This Phalaenopsis aphrodite subsp. formosana (Moth orchid) protein is ATP-dependent Clp protease proteolytic subunit.